The primary structure comprises 299 residues: Tyrosine recombinase XerC (299 aa).

The Core-binding (CB) domain maps to 1 to 85; sequence MEQHLDAYCM…AVRGFYKYLN (85 aa). The region spanning 106 to 285 is the Tyr recombinase domain; the sequence is RLPKTLDTDR…DFQHLATVYD (180 aa). Residues Arg146, Lys170, His237, Arg240, and His263 contribute to the active site. Tyr272 (O-(3'-phospho-DNA)-tyrosine intermediate) is an active-site residue.

Belongs to the 'phage' integrase family. XerC subfamily. Forms a cyclic heterotetrameric complex composed of two molecules of XerC and two molecules of XerD.

The protein localises to the cytoplasm. Functionally, site-specific tyrosine recombinase, which acts by catalyzing the cutting and rejoining of the recombining DNA molecules. The XerC-XerD complex is essential to convert dimers of the bacterial chromosome into monomers to permit their segregation at cell division. It also contributes to the segregational stability of plasmids. This chain is Tyrosine recombinase XerC, found in Pseudomonas syringae pv. tomato (strain ATCC BAA-871 / DC3000).